The sequence spans 452 residues: Mitochondrial distribution and morphology protein 34 (452 aa).

In terms of domain architecture, SMP-LTD spans 1-196 (MSFRVKGWSD…LPSIIYKMSR (196 aa)).

It belongs to the MDM34 family. In terms of assembly, component of the ER-mitochondria encounter structure (ERMES) or MDM complex, composed of mmm1, mdm10, mdm12 and mdm34.

Its subcellular location is the mitochondrion outer membrane. Its function is as follows. Component of the ERMES/MDM complex, which serves as a molecular tether to connect the endoplasmic reticulum (ER) and mitochondria. Components of this complex are involved in the control of mitochondrial shape and protein biogenesis, and function in nonvesicular lipid trafficking between the ER and mitochondria. Mdm34 is required for the interaction of the ER-resident membrane protein mmm1 and the outer mitochondrial membrane-resident beta-barrel protein mdm10. In Schizosaccharomyces pombe (strain 972 / ATCC 24843) (Fission yeast), this protein is Mitochondrial distribution and morphology protein 34.